Consider the following 933-residue polypeptide: Phospholipase D2 (933 aa).

Disordered stretches follow at residues 1–20 (MAAT…SSQL) and 134–160 (SPAP…RRTA). One can recognise a PX domain in the interval 65–195 (VIAQVVGTER…TEFLEVSQLS (131 aa)). A PH domain is found at 203 to 311 (KGLEGVIRKR…WAQEITELAQ (109 aa)). PLD phosphodiesterase domains are found at residues 437 to 464 (TLWA…AYGR) and 751 to 778 (ELIY…NDRS). The tract at residues 441 to 788 (HHEKLLVVDQ…LLGKRDSELA (348 aa)) is catalytic.

It belongs to the phospholipase D family. Interacts with PIP5K1B. Interacts with EGFR. In terms of processing, phosphorylated by FGR.

Its subcellular location is the cell membrane. It catalyses the reaction a 1,2-diacyl-sn-glycero-3-phosphocholine + H2O = a 1,2-diacyl-sn-glycero-3-phosphate + choline + H(+). The enzyme catalyses 1,2-dihexadecanoyl-sn-glycero-3-phosphocholine + H2O = 1,2-dihexadecanoyl-sn-glycero-3-phosphate + choline + H(+). Function as phospholipase selective for phosphatidylcholine. May have a role in signal-induced cytoskeletal regulation and/or endocytosis. The protein is Phospholipase D2 (PLD2) of Bos taurus (Bovine).